The following is a 109-amino-acid chain: Latartoxin-2a (109 aa).

The signal sequence occupies residues 1 to 19 (MKVLVIIALCLVAFQSALS). The propeptide at 20 to 37 (KKIENFESYIEDLKSEAR) is removed in mature form. A Processing quadruplet motif motif is present at residues 34-37 (SEAR). Cystine bridges form between Cys39-Cys56, Cys46-Cys67, Cys55-Cys81, Cys69-Cys79, and Cys72-Cys93. Val108 is modified (valine amide).

It belongs to the neurotoxin 19 (CSTX) family. 11 (latartoxin) subfamily. Contains 5 disulfide bonds. Post-translationally, cleavage of the propeptide depends on the processing quadruplet motif (XXXR, with at least one of X being E). Expressed by the venom gland.

It localises to the secreted. Insect toxin. Causes paralysis in larvae of C.vicina by depolarizing membranes at the neuromuscular junction. The polypeptide is Latartoxin-2a (Lachesana tarabaevi (Spider)).